The following is a 532-amino-acid chain: Cocaine esterase (532 aa).

Pyrrolidone carboxylic acid is present on Gln1. An intrachain disulfide couples Cys69 to Cys96. Residue Ser201 is the Acyl-ester intermediate of the active site. Asn249 carries N-linked (GlcNAc...) asparagine glycosylation. A disulfide bond links Cys253 and Cys264. Catalysis depends on charge relay system residues Glu318 and His430. Positions 529-532 match the Prevents secretion from ER motif; it reads HTEL.

The protein belongs to the type-B carboxylesterase/lipase family. Monomer.

The protein resides in the endoplasmic reticulum lumen. It carries out the reaction a carboxylic ester + H2O = an alcohol + a carboxylate + H(+). It catalyses the reaction cocaine + H2O = ecgonine methyl ester + benzoate + H(+). The enzyme catalyses 2-(5Z,8Z,11Z,14Z-eicosatetraenoyl)-glycerol + H2O = glycerol + (5Z,8Z,11Z,14Z)-eicosatetraenoate + H(+). The catalysed reaction is prostaglandin E2 1-glyceryl ester + H2O = prostaglandin E2 + glycerol + H(+). It carries out the reaction prostaglandin F2alpha 1-glyceryl ester + H2O = prostaglandin F2alpha + glycerol + H(+). In terms of biological role, involved in the detoxification of xenobiotics and in the activation of ester and amide prodrugs. Converts monoacylglycerides to free fatty acids and glycerol. Hydrolyzes of 2-arachidonoylglycerol and prostaglandins. The sequence is that of Cocaine esterase (CES2) from Oryctolagus cuniculus (Rabbit).